Consider the following 234-residue polypeptide: Endonuclease NucS (234 aa).

It belongs to the NucS endonuclease family.

The protein resides in the cytoplasm. Its function is as follows. Cleaves both 3' and 5' ssDNA extremities of branched DNA structures. The protein is Endonuclease NucS of Bifidobacterium adolescentis (strain ATCC 15703 / DSM 20083 / NCTC 11814 / E194a).